The primary structure comprises 350 residues: Nicotinate-nucleotide--dimethylbenzimidazole phosphoribosyltransferase (350 aa).

The active-site Proton acceptor is E316.

This sequence belongs to the CobT family.

It catalyses the reaction 5,6-dimethylbenzimidazole + nicotinate beta-D-ribonucleotide = alpha-ribazole 5'-phosphate + nicotinate + H(+). It participates in nucleoside biosynthesis; alpha-ribazole biosynthesis; alpha-ribazole from 5,6-dimethylbenzimidazole: step 1/2. In terms of biological role, catalyzes the synthesis of alpha-ribazole-5'-phosphate from nicotinate mononucleotide (NAMN) and 5,6-dimethylbenzimidazole (DMB). This is Nicotinate-nucleotide--dimethylbenzimidazole phosphoribosyltransferase from Pseudomonas syringae pv. tomato (strain ATCC BAA-871 / DC3000).